We begin with the raw amino-acid sequence, 478 residues long: tRNA modification GTPase MnmE (478 aa).

Residues Arg36, Glu94, and Lys133 each coordinate (6S)-5-formyl-5,6,7,8-tetrahydrofolate. The region spanning 230 to 402 is the TrmE-type G domain; the sequence is GIHVVLAGRP…LVETLCAKVG (173 aa). Asn240 serves as a coordination point for K(+). Residues 240–245, 259–265, and 284–287 each bind GTP; these read NAGKSS, TDVAGTT, and DTAG. Ser244 lines the Mg(2+) pocket. K(+) contacts are provided by Thr259, Val261, and Thr264. Residue Thr265 coordinates Mg(2+). Lys478 contributes to the (6S)-5-formyl-5,6,7,8-tetrahydrofolate binding site.

The protein belongs to the TRAFAC class TrmE-Era-EngA-EngB-Septin-like GTPase superfamily. TrmE GTPase family. Homodimer. Heterotetramer of two MnmE and two MnmG subunits. The cofactor is K(+).

The protein localises to the cytoplasm. Functionally, exhibits a very high intrinsic GTPase hydrolysis rate. Involved in the addition of a carboxymethylaminomethyl (cmnm) group at the wobble position (U34) of certain tRNAs, forming tRNA-cmnm(5)s(2)U34. This is tRNA modification GTPase MnmE from Psychrobacter arcticus (strain DSM 17307 / VKM B-2377 / 273-4).